The primary structure comprises 716 residues: 1,4-alpha-glucan branching enzyme GlgB (716 aa).

Catalysis depends on Asp399, which acts as the Nucleophile. Glu452 acts as the Proton donor in catalysis.

It belongs to the glycosyl hydrolase 13 family. GlgB subfamily. As to quaternary structure, monomer.

It catalyses the reaction Transfers a segment of a (1-&gt;4)-alpha-D-glucan chain to a primary hydroxy group in a similar glucan chain.. The protein operates within glycan biosynthesis; glycogen biosynthesis. Its function is as follows. Catalyzes the formation of the alpha-1,6-glucosidic linkages in glycogen by scission of a 1,4-alpha-linked oligosaccharide from growing alpha-1,4-glucan chains and the subsequent attachment of the oligosaccharide to the alpha-1,6 position. This is 1,4-alpha-glucan branching enzyme GlgB from Rhodopseudomonas palustris (strain ATCC BAA-98 / CGA009).